A 555-amino-acid chain; its full sequence is uncharacterized protein (555 aa).

Over 1–83 (MSNEDETTRL…GRRKLLCLYG (83 aa)) the chain is Extracellular. The helical transmembrane segment at 84-104 (LVMIICIAESISMTATIPLVM) threads the bilayer. Over 105-125 (DKVAEGISDENGHYDSVAVQT) the chain is Cytoplasmic. Residues 126–146 (IVSSISSSTMMIAGAISIFMA) traverse the membrane as a helical segment. The Extracellular segment spans residues 147–188 (GKWGELSDRIGRVRVFKYMSGIRVIGLLTHVFTLSSKMKYHK). The chain crosses the membrane as a helical span at residues 189–209 (WAIVLTACIVPSFGGLFALVA). Residues 210–229 (NGNSYVSDIVKTEHRMVTIG) are Cytoplasmic-facing. A helical membrane pass occupies residues 230–250 (IMMSCIYATMGVGPMFGSFLV). Topologically, residues 251–257 (KWTHGNG) are extracellular. Residues 258–278 (FIPIYTSIAFVILALIICETI) traverse the membrane as a helical segment. Residues 279–356 (MVEPRHETQM…LVPRHTVILL (78 aa)) are Cytoplasmic-facing. Residues 289 to 311 (AHSQSTYTKRREKLRSQSGSDDA) form a disordered region. The helical transmembrane segment at 357–377 (IVLDILFVCGTTSCMPALILF) threads the bilayer. Residues 378 to 386 (STYEYKWHA) lie on the Extracellular side of the membrane. The chain crosses the membrane as a helical span at residues 387–407 (VELGYFISILGIGRGVVLLVV). The Cytoplasmic portion of the chain corresponds to 408–428 (SPTLLYTLKRIYQHLNHSIDK). A helical transmembrane segment spans residues 429–449 (IDIFCIQFSMIVITLSLFVMI). The Extracellular portion of the chain corresponds to 450–459 (RFGEKTPTSM). The chain crosses the membrane as a helical span at residues 460–480 (IIFALLQALSAFCSPTLQSGI). Topologically, residues 481-491 (IKYTSKKHTGE) are cytoplasmic. The chain crosses the membrane as a helical span at residues 492–512 (MFGAMALVRSCVMLVIPPILL). Residues 513–523 (KLYGSTVSVNP) lie on the Extracellular side of the membrane. A helical membrane pass occupies residues 524–544 (SLFMYIPFSTSIVAILLTFFL). At 545 to 555 (RIYKNPPLDGP) the chain is on the cytoplasmic side.

Its subcellular location is the membrane. This is an uncharacterized protein from Saccharomyces cerevisiae (strain ATCC 204508 / S288c) (Baker's yeast).